The following is a 788-amino-acid chain: DNA ligase (788 aa).

NAD(+) is bound by residues 35–39 (DAEYD), 84–85 (SL), and E124. K126 (N6-AMP-lysine intermediate) is an active-site residue. NAD(+) contacts are provided by R147, E184, K300, and K324. Positions 418, 421, 448, and 454 each coordinate Zn(2+). Residues 707 to 788 (AEGLPLAGQT…FIERLAQLGS (82 aa)) enclose the BRCT domain.

It belongs to the NAD-dependent DNA ligase family. LigA subfamily. The cofactor is Mg(2+). Requires Mn(2+) as cofactor.

The catalysed reaction is NAD(+) + (deoxyribonucleotide)n-3'-hydroxyl + 5'-phospho-(deoxyribonucleotide)m = (deoxyribonucleotide)n+m + AMP + beta-nicotinamide D-nucleotide.. Functionally, DNA ligase that catalyzes the formation of phosphodiester linkages between 5'-phosphoryl and 3'-hydroxyl groups in double-stranded DNA using NAD as a coenzyme and as the energy source for the reaction. It is essential for DNA replication and repair of damaged DNA. This is DNA ligase from Stutzerimonas stutzeri (strain A1501) (Pseudomonas stutzeri).